A 588-amino-acid polypeptide reads, in one-letter code: Outer membrane transporter CdiB (588 aa).

Positions 104-179 (FTVSSIVVSG…GVLHITVMEG (76 aa)) constitute a POTRA domain.

It belongs to the TPS (TC 1.B.20) family.

It is found in the cell outer membrane. In terms of biological role, potential outer membrane protein component of a toxin-immunity protein module, which functions as a cellular contact-dependent growth inhibition (CDI) system. CDI modules allow bacteria to communicate with and inhibit the growth of closely related neighboring bacteria in a contact-dependent fashion. This protein may be required for secretion and assembly of the CdiA toxin protein. Inhibitory cells must be in logarithmic (not stationary) phase to inhibit growth of their targets, while the presence of P or S but not type 1 pili protects the target cells against growth inhibition. Probable member of a two partner secretion pathway (TPS) in which it mediates the secretion of CdiA. This Escherichia coli protein is Outer membrane transporter CdiB.